A 338-amino-acid chain; its full sequence is Phenylalanine--tRNA ligase alpha subunit (338 aa).

Glutamate 252 lines the Mg(2+) pocket.

Belongs to the class-II aminoacyl-tRNA synthetase family. Phe-tRNA synthetase alpha subunit type 1 subfamily. Tetramer of two alpha and two beta subunits. Mg(2+) is required as a cofactor.

The protein resides in the cytoplasm. It carries out the reaction tRNA(Phe) + L-phenylalanine + ATP = L-phenylalanyl-tRNA(Phe) + AMP + diphosphate + H(+). The protein is Phenylalanine--tRNA ligase alpha subunit of Pseudomonas fluorescens (strain SBW25).